A 571-amino-acid chain; its full sequence is Proline--tRNA ligase (571 aa).

It belongs to the class-II aminoacyl-tRNA synthetase family. ProS type 1 subfamily. In terms of assembly, homodimer.

Its subcellular location is the cytoplasm. It catalyses the reaction tRNA(Pro) + L-proline + ATP = L-prolyl-tRNA(Pro) + AMP + diphosphate. Its function is as follows. Catalyzes the attachment of proline to tRNA(Pro) in a two-step reaction: proline is first activated by ATP to form Pro-AMP and then transferred to the acceptor end of tRNA(Pro). As ProRS can inadvertently accommodate and process non-cognate amino acids such as alanine and cysteine, to avoid such errors it has two additional distinct editing activities against alanine. One activity is designated as 'pretransfer' editing and involves the tRNA(Pro)-independent hydrolysis of activated Ala-AMP. The other activity is designated 'posttransfer' editing and involves deacylation of mischarged Ala-tRNA(Pro). The misacylated Cys-tRNA(Pro) is not edited by ProRS. In Psychromonas ingrahamii (strain DSM 17664 / CCUG 51855 / 37), this protein is Proline--tRNA ligase.